The following is a 285-amino-acid chain: Transmembrane protein 158 (285 aa).

Positions 1–20 (MLPLLAALLAAACPLPPARG) are cleaved as a signal peptide. A disordered region spans residues 20–43 (GGATDAPGLSGTPPNASANASFTG). A compositionally biased stretch (polar residues) spans 31–43 (TPPNASANASFTG). A glycan (N-linked (GlcNAc...) asparagine) is linked at Asn-73. Transmembrane regions (helical) follow at residues 215 to 235 (LVIVVWSVAALIWPVPIIAGF) and 263 to 283 (AAAAAAAAAAAAAAAVTSGVA).

Belongs to the TMEM158 family. N-glycosylated. In terms of tissue distribution, detected only in the brain.

Its subcellular location is the membrane. In terms of biological role, receptor for brain injury-derived neurotrophic peptide (BINP), a synthetic 13-mer peptide. This Rattus norvegicus (Rat) protein is Transmembrane protein 158 (Tmem158).